The sequence spans 106 residues: Putative toxin Rv3098A/RVBD_3098A (106 aa).

It belongs to the PemK/MazF family. In terms of assembly, forms a complex with cognate antitoxin Rv3098B/RVBD_3098B.

Putative toxic component of a possible type II toxin-antitoxin (TA) system. Its toxic effect may be neutralized by cognate antitoxin Rv3098B/RVBD_3098B. The protein is Putative toxin Rv3098A/RVBD_3098A of Mycobacterium tuberculosis (strain ATCC 25618 / H37Rv).